Reading from the N-terminus, the 486-residue chain is Putative protease Do-like 13 (486 aa).

Residues 44-229 (KINTFSSKPN…IPAPVVKHFI (186 aa)) are serine protease. Residues His-83, Asp-114, and Ser-192 each act as charge relay system in the active site. The 94-residue stretch at 241–334 (FCSLNLSYQH…TILLKILREG (94 aa)) folds into the PDZ domain.

Belongs to the peptidase S1C family.

Functionally, putative serine protease. This is Putative protease Do-like 13 (DEGP13) from Arabidopsis thaliana (Mouse-ear cress).